We begin with the raw amino-acid sequence, 315 residues long: Peroxidase 1 (315 aa).

The signal sequence occupies residues 1-21; sequence MASSSYTSLLVLVALVTAASA. Residue Gln22 is modified to Pyrrolidone carboxylic acid. 4 disulfides stabilise this stretch: Cys32/Cys107, Cys65/Cys70, Cys113/Cys310, and Cys193/Cys219. His63 acts as the Proton acceptor in catalysis. Positions 64, 67, 69, 71, and 73 each coordinate Ca(2+). Position 155 (Pro155) interacts with substrate. N-linked (GlcNAc...) asparagine glycosylation is present at Asn158. His186 contacts heme b. Thr187 is a binding site for Ca(2+). Residues Asp234, Thr237, and Asp242 each contribute to the Ca(2+) site. Asn265 carries N-linked (GlcNAc...) asparagine glycosylation.

It belongs to the peroxidase family. Classical plant (class III) peroxidase subfamily. The cofactor is Ca(2+). Requires heme b as cofactor.

Its subcellular location is the secreted. It carries out the reaction 2 a phenolic donor + H2O2 = 2 a phenolic radical donor + 2 H2O. Its function is as follows. Removal of H(2)O(2), oxidation of toxic reductants, biosynthesis and degradation of lignin, suberization, auxin catabolism, response to environmental stresses such as wounding, pathogen attack and oxidative stress. These functions might be dependent on each isozyme/isoform in each plant tissue. In terms of biological role, involved in defense response to powdery meldew fungus. The chain is Peroxidase 1 from Hordeum vulgare (Barley).